The following is a 208-amino-acid chain: uncharacterized protein (208 aa).

This is an uncharacterized protein from Ureaplasma parvum serovar 3 (strain ATCC 700970).